A 473-amino-acid chain; its full sequence is MSFDLSFPKSFLWGGATAANQFEGAYNEDGKGLSIQDIAPKGVMGPITEVPTEDNMKLIGIDFYHRYKEDIKLFAEMGFKTFRLSIAWSRIFPNGDDEIPNEKGLEFYDKVFDELQRYGIEPLVTLSHYETPLNLSKKYNGWANRDLIGFYERYVRTVFTRYKDKVKYWLTFNEINSAIHAPYMSAGIWTDKSELSKQDLYQAMHHELVASALAVKIGHEINPDFKIGCMILGIPVYPLTPHPDDLIEKMRVERESLFFADVHARGKYPRYMNRLFKENNIEIKWHEDDAEILSNVVDFISFSYYMSSCATADEEKKKAGAGNLLAGVPNPYLKASEWGWQIDPKGLRLILNELYDRYEKPLFIVENGLGAVDELVTDENGNKTVNDDYRIKYLNDHLVQVAEAIEDGVELMGYTTWGCIDLVSASTAELKKRYGFIYVDRHDDGSGTLERYKKKSFNWYKEVIATNGKSLER.

Residue Glu-174 is the Proton donor of the active site. Glu-366 functions as the Nucleophile in the catalytic mechanism.

This sequence belongs to the glycosyl hydrolase 1 family.

The catalysed reaction is 6-phospho-beta-D-glucosyl-(1-&gt;4)-D-glucose + H2O = D-glucose 6-phosphate + D-glucose. This is 6-phospho-beta-glucosidase (abgA) from Clostridium longisporum.